A 622-amino-acid chain; its full sequence is Leucine-rich repeat-containing protein 70 (622 aa).

Residues 1 to 31 form the signal peptide; the sequence is MCGLQFSLPCLRLFLVVTCYLLLLLHKEILG. An LRRNT domain is found at 32–60; that stretch reads CSSVCQLCTGRQINCRNLGLSSIPKNFPE. LRR repeat units follow at residues 61–82, 85–106, 109–130, 133–154, 157–178, 181–202, 205–226, 229–250, 253–274, 277–298, 301–322, and 326–347; these read STVF…ELTG, SLVA…AFVQ, HLYF…IFKG, NLRN…VFND, SVQY…TFVG, ALRI…GFQH, NLAC…AFEV, SLRR…AFKG, NLEY…GFSG, NLKH…TFSL, NLIY…TFEN, and SLKI…VLKP. N-linked (GlcNAc...) asparagine glycosylation is present at N215. N266 carries N-linked (GlcNAc...) asparagine glycosylation. N-linked (GlcNAc...) asparagine glycosylation is found at N331 and N400. The LRRCT domain maps to 359-406; it reads NPWECNCKLLGLRDWLASSAITLNIYCQNPPSMRGRALRYINITNCVT. A helical transmembrane segment spans residues 527–547; it reads AFDILLAFFILACVLIIFLIY.

In terms of tissue distribution, expressed at low levels in many tissues, including smooth muscle, brain, uterus, pancreas, cartilage, adipose, spleen and testis.

Its subcellular location is the membrane. In terms of biological role, renders cells highly sensitive to the activation by cytokines and lipopolysaccharide (LPS). In Homo sapiens (Human), this protein is Leucine-rich repeat-containing protein 70 (LRRC70).